Here is a 419-residue protein sequence, read N- to C-terminus: Transcription termination factor Rho (419 aa).

The region spanning 48–123 (DIFGDGVLEI…LKVNEVNYDK (76 aa)) is the Rho RNA-BD domain. RNA-binding stretches follow at residues 61-66 (GFGFLR), 78-80 (DIY), and 108-110 (ERY). Residues 169 to 174 (GRGQRG), 181 to 186 (KAGKTI), and Arg-212 contribute to the ATP site. Residues 284 to 288 (VLTGG) form an RNA-binding 2 region.

The protein belongs to the Rho family. As to quaternary structure, homohexamer. The homohexamer assembles into an open ring structure.

Facilitates transcription termination by a mechanism that involves Rho binding to the nascent RNA, activation of Rho's RNA-dependent ATPase activity, and release of the mRNA from the DNA template. The sequence is that of Transcription termination factor Rho from Buchnera aphidicola subsp. Acyrthosiphon pisum (strain APS) (Acyrthosiphon pisum symbiotic bacterium).